Consider the following 490-residue polypeptide: Glutamate--tRNA ligase (490 aa).

A 'HIGH' region motif is present at residues 12–22 (PSPTGTPHVGL). The short motif at 256–260 (KLSKR) is the 'KMSKS' region element. Lysine 259 contacts ATP.

Belongs to the class-I aminoacyl-tRNA synthetase family. Glutamate--tRNA ligase type 1 subfamily. As to quaternary structure, monomer.

It localises to the cytoplasm. The catalysed reaction is tRNA(Glu) + L-glutamate + ATP = L-glutamyl-tRNA(Glu) + AMP + diphosphate. Its function is as follows. Catalyzes the attachment of glutamate to tRNA(Glu) in a two-step reaction: glutamate is first activated by ATP to form Glu-AMP and then transferred to the acceptor end of tRNA(Glu). In Mycobacterium sp. (strain KMS), this protein is Glutamate--tRNA ligase.